Here is a 454-residue protein sequence, read N- to C-terminus: MSDNDTIVAQATPPGRGGVGILRISGFKAREVAETVLGKLPKPRYADYLPFKDADGSVLDQGIALWFPGPNSFTGEDVLELQGHGGPVILDLLLKRILTIPGLRIARPGEFSERAFLNDKLDLAQAEAIADLIDASSEQAARSALNSLQGAFSARVNHLVEALTHLRIYVEAAIDFPDEEIDFLSDGKIEAQLNDVIADLDAVRAEARQGSLLREGMKVVIAGRPNAGKSSLLNALAGREAAIVTDIAGTTRDVLREHIHIDGMPLHIIDTAGLREASDEVERIGIERAWQEIEQADRVLFMVDGTTTDAVDPAEIWPEFIARLPAKLPITVVRNKADITGETLGMSEVNGHALIRLSAKTGEGVDVLRNHLKQSMGFDTNMEGGFLARRRHLQALEQAAEHLQQGKAQLLGAWAGELLAEELRLAQQNLSEITGEFTSDDLLGRIFSSFCIGK.

(6S)-5-formyl-5,6,7,8-tetrahydrofolate is bound by residues arginine 23, glutamate 80, and lysine 120. The TrmE-type G domain occupies 216–377 (GMKVVIAGRP…LRNHLKQSMG (162 aa)). K(+) is bound at residue asparagine 226. GTP contacts are provided by residues 226–231 (NAGKSS), 245–251 (TDIAGTT), 270–273 (DTAG), and 335–338 (NKAD). Serine 230 contacts Mg(2+). 3 residues coordinate K(+): threonine 245, isoleucine 247, and threonine 250. A Mg(2+)-binding site is contributed by threonine 251. Lysine 454 is a (6S)-5-formyl-5,6,7,8-tetrahydrofolate binding site.

The protein belongs to the TRAFAC class TrmE-Era-EngA-EngB-Septin-like GTPase superfamily. TrmE GTPase family. As to quaternary structure, homodimer. Heterotetramer of two MnmE and two MnmG subunits. It depends on K(+) as a cofactor.

Its subcellular location is the cytoplasm. In terms of biological role, exhibits a very high intrinsic GTPase hydrolysis rate. Involved in the addition of a carboxymethylaminomethyl (cmnm) group at the wobble position (U34) of certain tRNAs, forming tRNA-cmnm(5)s(2)U34. The chain is tRNA modification GTPase MnmE from Escherichia coli O157:H7.